The chain runs to 568 residues: Proline--tRNA ligase (568 aa).

It belongs to the class-II aminoacyl-tRNA synthetase family. ProS type 1 subfamily. As to quaternary structure, homodimer.

Its subcellular location is the cytoplasm. It carries out the reaction tRNA(Pro) + L-proline + ATP = L-prolyl-tRNA(Pro) + AMP + diphosphate. In terms of biological role, catalyzes the attachment of proline to tRNA(Pro) in a two-step reaction: proline is first activated by ATP to form Pro-AMP and then transferred to the acceptor end of tRNA(Pro). As ProRS can inadvertently accommodate and process non-cognate amino acids such as alanine and cysteine, to avoid such errors it has two additional distinct editing activities against alanine. One activity is designated as 'pretransfer' editing and involves the tRNA(Pro)-independent hydrolysis of activated Ala-AMP. The other activity is designated 'posttransfer' editing and involves deacylation of mischarged Ala-tRNA(Pro). The misacylated Cys-tRNA(Pro) is not edited by ProRS. The chain is Proline--tRNA ligase from Campylobacter jejuni subsp. jejuni serotype O:6 (strain 81116 / NCTC 11828).